A 264-amino-acid chain; its full sequence is tRNA pseudouridine synthase A (264 aa).

The active-site Nucleophile is Asp-51. Tyr-109 is a binding site for substrate.

It belongs to the tRNA pseudouridine synthase TruA family. Homodimer.

The enzyme catalyses uridine(38/39/40) in tRNA = pseudouridine(38/39/40) in tRNA. Its function is as follows. Formation of pseudouridine at positions 38, 39 and 40 in the anticodon stem and loop of transfer RNAs. The polypeptide is tRNA pseudouridine synthase A (Photorhabdus laumondii subsp. laumondii (strain DSM 15139 / CIP 105565 / TT01) (Photorhabdus luminescens subsp. laumondii)).